A 230-amino-acid chain; its full sequence is Orotidine 5'-phosphate decarboxylase (230 aa).

Residues aspartate 11, lysine 34, 61–70 (DLKLHDIPNT), threonine 117, arginine 179, glutamine 188, glycine 208, and arginine 209 contribute to the substrate site. The active-site Proton donor is the lysine 63.

This sequence belongs to the OMP decarboxylase family. Type 1 subfamily. As to quaternary structure, homodimer.

The enzyme catalyses orotidine 5'-phosphate + H(+) = UMP + CO2. It functions in the pathway pyrimidine metabolism; UMP biosynthesis via de novo pathway; UMP from orotate: step 2/2. Its function is as follows. Catalyzes the decarboxylation of orotidine 5'-monophosphate (OMP) to uridine 5'-monophosphate (UMP). The protein is Orotidine 5'-phosphate decarboxylase of Streptococcus pyogenes serotype M18 (strain MGAS8232).